A 168-amino-acid chain; its full sequence is Peptide deformylase (168 aa).

Fe cation contacts are provided by Cys92 and His134. Glu135 is an active-site residue. A Fe cation-binding site is contributed by His138.

The protein belongs to the polypeptide deformylase family. Requires Fe(2+) as cofactor.

The catalysed reaction is N-terminal N-formyl-L-methionyl-[peptide] + H2O = N-terminal L-methionyl-[peptide] + formate. Removes the formyl group from the N-terminal Met of newly synthesized proteins. Requires at least a dipeptide for an efficient rate of reaction. N-terminal L-methionine is a prerequisite for activity but the enzyme has broad specificity at other positions. The polypeptide is Peptide deformylase (Hahella chejuensis (strain KCTC 2396)).